The primary structure comprises 269 residues: MRILLTNDDGIHAPGLGSLERIARMLSDDIWIVAPEYEQSGAGRALTLSDPIRVRRIDPRRFAVEGTPTDCVAMAMQQLIEGPAPDLVLSGVNRGQNLAEDVTLSGTVAGAIEGMAFGIRSIALSQAMTYFHDEVVAHWETAEHFGPGIVQRLLEVGWPKDVIINVNFPAVAPEMVTEVEVTRQGFRDSHMRSMEKRTDLRGRDYYWTGFVVKPSNPAEGTDLKAVYQGRISVTPLHIDLTHNQTVAAMKGALGGTPPRFDQPGLETAS.

A divalent metal cation-binding residues include Asp-8, Asp-9, Ser-40, and Asn-93.

It belongs to the SurE nucleotidase family. A divalent metal cation is required as a cofactor.

It localises to the cytoplasm. The catalysed reaction is a ribonucleoside 5'-phosphate + H2O = a ribonucleoside + phosphate. Nucleotidase that shows phosphatase activity on nucleoside 5'-monophosphates. The polypeptide is 5'-nucleotidase SurE (Caulobacter sp. (strain K31)).